The chain runs to 320 residues: Putative GDP-polyphosphate phosphotransferase PKK2A (320 aa).

3 disordered regions span residues 1 to 21 (MRKK…PKLD), 246 to 267 (RPLP…PPRD), and 281 to 320 (EERI…KSKK). The segment covering 12 to 21 (DFRKNPPKLD) has biased composition (basic and acidic residues). Basic and acidic residues predominate over residues 281 to 290 (EERIKKEEKA).

This sequence belongs to the polyphosphate kinase 2 (PPK2) family. Class I subfamily.

The enzyme catalyses [phosphate](n) + GTP = [phosphate](n+1) + GDP. The sequence is that of Putative GDP-polyphosphate phosphotransferase PKK2A from Corynebacterium glutamicum (strain ATCC 13032 / DSM 20300 / JCM 1318 / BCRC 11384 / CCUG 27702 / LMG 3730 / NBRC 12168 / NCIMB 10025 / NRRL B-2784 / 534).